Here is a 298-residue protein sequence, read N- to C-terminus: HTH-type transcriptional regulator ArgP (298 aa).

The region spanning 4–60 is the HTH lysR-type domain; that stretch reads LDYKWIEALDAVVAQGGFERAAEELYISQSAVSQRIKQLERFLAQPVLIREQPPKPT. Residues 21–40 constitute a DNA-binding region (H-T-H motif); that stretch reads FERAAEELYISQSAVSQRIK.

It belongs to the LysR transcriptional regulatory family. Homodimer.

Its function is as follows. Controls the transcription of genes involved in arginine and lysine metabolism. The polypeptide is HTH-type transcriptional regulator ArgP (Vibrio vulnificus (strain CMCP6)).